A 316-amino-acid polypeptide reads, in one-letter code: 2,3-dihydroxyphenylpropionate/2,3-dihydroxicinnamic acid 1,2-dioxygenase (316 aa).

The active-site Proton donor is His-118. The Proton acceptor role is filled by His-182.

The protein belongs to the LigB/MhpB extradiol dioxygenase family. As to quaternary structure, homotetramer. It depends on Fe(2+) as a cofactor.

It carries out the reaction 3-(2,3-dihydroxyphenyl)propanoate + O2 = (2Z,4E)-2-hydroxy-6-oxonona-2,4-dienedioate + H(+). It catalyses the reaction (2E)-3-(2,3-dihydroxyphenyl)prop-2-enoate + O2 = (2Z,4E,7E)-2-hydroxy-6-oxonona-2,4,7-trienedioate + H(+). It participates in aromatic compound metabolism; 3-phenylpropanoate degradation. Its function is as follows. Catalyzes the non-heme iron(II)-dependent oxidative cleavage of 2,3-dihydroxyphenylpropionic acid and 2,3-dihydroxicinnamic acid into 2-hydroxy-6-ketononadienedioate and 2-hydroxy-6-ketononatrienedioate, respectively. The protein is 2,3-dihydroxyphenylpropionate/2,3-dihydroxicinnamic acid 1,2-dioxygenase of Mycolicibacterium vanbaalenii (strain DSM 7251 / JCM 13017 / BCRC 16820 / KCTC 9966 / NRRL B-24157 / PYR-1) (Mycobacterium vanbaalenii).